We begin with the raw amino-acid sequence, 205 residues long: Imidazole glycerol phosphate synthase subunit HisH (205 aa).

The 203-residue stretch at 3-205 (RIALLDYGMG…LLKNFVEWNI (203 aa)) folds into the Glutamine amidotransferase type-1 domain. The active-site Nucleophile is the C80. Active-site residues include H185 and E187.

Heterodimer of HisH and HisF.

It is found in the cytoplasm. The catalysed reaction is 5-[(5-phospho-1-deoxy-D-ribulos-1-ylimino)methylamino]-1-(5-phospho-beta-D-ribosyl)imidazole-4-carboxamide + L-glutamine = D-erythro-1-(imidazol-4-yl)glycerol 3-phosphate + 5-amino-1-(5-phospho-beta-D-ribosyl)imidazole-4-carboxamide + L-glutamate + H(+). It catalyses the reaction L-glutamine + H2O = L-glutamate + NH4(+). Its pathway is amino-acid biosynthesis; L-histidine biosynthesis; L-histidine from 5-phospho-alpha-D-ribose 1-diphosphate: step 5/9. In terms of biological role, IGPS catalyzes the conversion of PRFAR and glutamine to IGP, AICAR and glutamate. The HisH subunit catalyzes the hydrolysis of glutamine to glutamate and ammonia as part of the synthesis of IGP and AICAR. The resulting ammonia molecule is channeled to the active site of HisF. The protein is Imidazole glycerol phosphate synthase subunit HisH of Acinetobacter baylyi (strain ATCC 33305 / BD413 / ADP1).